Here is a 187-residue protein sequence, read N- to C-terminus: Elongation factor P (187 aa).

The protein belongs to the elongation factor P family.

The protein localises to the cytoplasm. Its pathway is protein biosynthesis; polypeptide chain elongation. Functionally, involved in peptide bond synthesis. Stimulates efficient translation and peptide-bond synthesis on native or reconstituted 70S ribosomes in vitro. Probably functions indirectly by altering the affinity of the ribosome for aminoacyl-tRNA, thus increasing their reactivity as acceptors for peptidyl transferase. The polypeptide is Elongation factor P (Mycolicibacterium smegmatis (strain ATCC 700084 / mc(2)155) (Mycobacterium smegmatis)).